We begin with the raw amino-acid sequence, 24 residues long: Antimicrobial peptide PGQ (24 aa).

It belongs to the gastrin/cholecystokinin family. Magainin subfamily. As to expression, is synthesized in the stomach and stored in a novel granular multinucleated cell in the gastric mucosa. It is stored as active, processed peptides in large granules within the granular gland secretions of the skin.

It localises to the secreted. Its function is as follows. Antimicrobial peptide. The sequence is that of Antimicrobial peptide PGQ (pgq) from Xenopus laevis (African clawed frog).